Here is a 329-residue protein sequence, read N- to C-terminus: Probable fructokinase-2 (329 aa).

Belongs to the carbohydrate kinase PfkB family.

It carries out the reaction D-fructose + ATP = D-fructose 6-phosphate + ADP + H(+). It participates in glycan biosynthesis; starch biosynthesis. Its function is as follows. May play an important role in maintaining the flux of carbon towards starch formation. The sequence is that of Probable fructokinase-2 from Arabidopsis thaliana (Mouse-ear cress).